A 363-amino-acid chain; its full sequence is DNA polymerase IV (363 aa).

The region spanning 14 to 197 (IIHIDMDAFF…LPVEKFHGVG (184 aa)) is the UmuC domain. Mg(2+)-binding residues include aspartate 18 and aspartate 115. Residue glutamate 116 is part of the active site.

Belongs to the DNA polymerase type-Y family. Monomer. Requires Mg(2+) as cofactor.

The protein resides in the cytoplasm. It carries out the reaction DNA(n) + a 2'-deoxyribonucleoside 5'-triphosphate = DNA(n+1) + diphosphate. Poorly processive, error-prone DNA polymerase involved in untargeted mutagenesis. Copies undamaged DNA at stalled replication forks, which arise in vivo from mismatched or misaligned primer ends. These misaligned primers can be extended by PolIV. Exhibits no 3'-5' exonuclease (proofreading) activity. May be involved in translesional synthesis, in conjunction with the beta clamp from PolIII. The polypeptide is DNA polymerase IV (Lactococcus lactis subsp. lactis (strain IL1403) (Streptococcus lactis)).